Reading from the N-terminus, the 258-residue chain is Type III pantothenate kinase (258 aa).

6 to 13 (DVGNTNTV) is a binding site for ATP. Substrate is bound by residues tyrosine 100 and 107–110 (GADR). The Proton acceptor role is filled by aspartate 109. Aspartate 129 serves as a coordination point for K(+). Residue threonine 132 coordinates ATP. Threonine 184 provides a ligand contact to substrate.

This sequence belongs to the type III pantothenate kinase family. In terms of assembly, homodimer. The cofactor is NH4(+). It depends on K(+) as a cofactor.

It is found in the cytoplasm. It catalyses the reaction (R)-pantothenate + ATP = (R)-4'-phosphopantothenate + ADP + H(+). The protein operates within cofactor biosynthesis; coenzyme A biosynthesis; CoA from (R)-pantothenate: step 1/5. Catalyzes the phosphorylation of pantothenate (Pan), the first step in CoA biosynthesis. This Bacillus licheniformis (strain ATCC 14580 / DSM 13 / JCM 2505 / CCUG 7422 / NBRC 12200 / NCIMB 9375 / NCTC 10341 / NRRL NRS-1264 / Gibson 46) protein is Type III pantothenate kinase.